Consider the following 211-residue polypeptide: Ras-related protein Rab-38 (211 aa).

GTP-binding residues include Gly-19, Val-20, Gly-21, Lys-22, Thr-23, Ser-24, Ser-35, Ser-36, Tyr-38, and Thr-41. Thr-23 contributes to the Mg(2+) binding site. Residues 32-46 (QNFSSHYRATIGVDF) carry the Switch 1 motif. Residues Thr-41 and Asp-65 each contribute to the Mg(2+) site. Gly-68, Lys-128, Asp-130, Ala-160, and Lys-161 together coordinate GTP. Positions 68–81 (GQERFGNMTRVYYR) match the Switch 2 motif. Cys-205 is lipidated: S-palmitoyl cysteine. The S-geranylgeranyl cysteine moiety is linked to residue Cys-208.

Belongs to the small GTPase superfamily. Rab family. Interacts with ANKRD27. Mg(2+) is required as a cofactor.

The protein resides in the cell membrane. It is found in the cytoplasmic vesicle. The protein localises to the phagosome. It localises to the phagosome membrane. Its subcellular location is the melanosome. The protein resides in the melanosome membrane. It catalyses the reaction GTP + H2O = GDP + phosphate + H(+). Regulated by guanine nucleotide exchange factors (GEFs) including the BLOC-3 complex composed of HPS1 and HPS4 which promote the exchange of bound GDP for free GTP. Regulated by GTPase activating proteins (GAPs) including SGSM2 which increase the GTP hydrolysis activity. Inhibited by GDP dissociation inhibitors (GDIs). Functionally, the small GTPases Rab are key regulators of intracellular membrane trafficking, from the formation of transport vesicles to their fusion with membranes. Rabs cycle between an inactive GDP-bound form and an active GTP-bound form that is able to recruit to membranes different sets of downstream effectors directly responsible for vesicle formation, movement, tethering and fusion. RAB38 plays a role in the maturation of phagosomes that engulf pathogens, such as S.aureus and Mycobacterium. May be involved in melanosomal transport and docking. Involved in the proper sorting of TYRP1. Involved in peripheral melanosomal distribution of TYRP1 in melanocytes; the function, which probably is implicating vesicle-trafficking, includes cooperation with ANKRD27 and VAMP7. Plays an important role in the control of melanin production and melanosome biogenesis. In concert with RAB32, regulates the proper trafficking of melanogenic enzymes TYR, TYRP1 and DCT/TYRP2 to melanosomes in melanocytes. The protein is Ras-related protein Rab-38 of Mus musculus (Mouse).